A 271-amino-acid chain; its full sequence is Thiosulfate sulfurtransferase (271 aa).

Rhodanese domains are found at residues 21-129 and 159-270; these read SAPE…PLSR and GAAD…TPVE. Catalysis depends on Cys-230, which acts as the Cysteine persulfide intermediate. Residue Arg-235 participates in substrate binding.

It localises to the cytoplasm. It carries out the reaction thiosulfate + hydrogen cyanide = thiocyanate + sulfite + 2 H(+). The protein is Thiosulfate sulfurtransferase (rhdA) of Azotobacter vinelandii.